A 106-amino-acid chain; its full sequence is Small ribosomal subunit protein uS10 (106 aa).

Belongs to the universal ribosomal protein uS10 family. Part of the 30S ribosomal subunit.

Its function is as follows. Involved in the binding of tRNA to the ribosomes. The polypeptide is Small ribosomal subunit protein uS10 (Hyphomonas neptunium (strain ATCC 15444)).